Here is a 493-residue protein sequence, read N- to C-terminus: Cysteine--tRNA ligase (493 aa).

A Zn(2+)-binding site is contributed by cysteine 29. Residues 31 to 41 (VTVYDLSHIGH) carry the 'HIGH' region motif. Zn(2+) contacts are provided by cysteine 209, histidine 234, and glutamate 238. The 'KMSKS' region motif lies at 266–270 (KMSKS). Lysine 269 contacts ATP.

It belongs to the class-I aminoacyl-tRNA synthetase family. Monomer. Zn(2+) is required as a cofactor.

The protein resides in the cytoplasm. The catalysed reaction is tRNA(Cys) + L-cysteine + ATP = L-cysteinyl-tRNA(Cys) + AMP + diphosphate. In Syntrophobacter fumaroxidans (strain DSM 10017 / MPOB), this protein is Cysteine--tRNA ligase.